The primary structure comprises 291 residues: tRNA dimethylallyltransferase (291 aa).

8 to 15 lines the ATP pocket; that stretch reads GSTASGKT. Residue 10–15 coordinates substrate; sequence TASGKT. Residues 33–36 form an interaction with substrate tRNA region; the sequence is DSLC.

This sequence belongs to the IPP transferase family. Monomer. It depends on Mg(2+) as a cofactor.

It catalyses the reaction adenosine(37) in tRNA + dimethylallyl diphosphate = N(6)-dimethylallyladenosine(37) in tRNA + diphosphate. Its function is as follows. Catalyzes the transfer of a dimethylallyl group onto the adenine at position 37 in tRNAs that read codons beginning with uridine, leading to the formation of N6-(dimethylallyl)adenosine (i(6)A). In Aliarcobacter butzleri (strain RM4018) (Arcobacter butzleri), this protein is tRNA dimethylallyltransferase.